Consider the following 555-residue polypeptide: Dynein regulatory complex protein 11 (555 aa).

2 consecutive IQ domains span residues 154–183 and 199–226; these read EDEAILMIQKNERGRQARERARLAAITKRQ and HEEAARKIQAAIRGFLWRRRIKKEADKE. 4 disordered regions span residues 232-255, 299-377, 450-469, and 501-555; these read MKPKPRDPKRDPQMGEAKNLMRRK, KRNP…EQKI, AAKLGKKGKKKKGKKKEPFS, and AKKD…SCGA. 2 stretches are compositionally biased toward basic and acidic residues: residues 235–244 and 338–367; these read KPRDPKRDPQ and GDGKGKGKDGKGDAKKDAKKDPKKDKKGGG. Over residues 452–464 the composition is skewed to basic residues; that stretch reads KLGKKGKKKKGKK. The segment covering 501–521 has biased composition (basic and acidic residues); that stretch reads AKKDEKDAAGDGKGKGKDGKG. Over residues 537–546 the composition is skewed to basic residues; sequence KKKKGGKKKS.

The protein belongs to the AAA ATPase family. DRC11 subfamily. As to quaternary structure, component of the nexin-dynein regulatory complex (N-DRC). Interacts with DRC5.

The protein resides in the cytoplasm. It localises to the cytoskeleton. Its subcellular location is the flagellum axoneme. Functionally, component of the nexin-dynein regulatory complex (N-DRC), a key regulator of ciliary/flagellar motility which maintains the alignment and integrity of the distal axoneme and regulates microtubule sliding in motile axonemes. The sequence is that of Dynein regulatory complex protein 11 from Chlamydomonas reinhardtii (Chlamydomonas smithii).